Consider the following 228-residue polypeptide: 7-cyano-7-deazaguanine synthase (228 aa).

Residue 7 to 17 coordinates ATP; that stretch reads LSGGLDSAVNL. Cysteine 192, cysteine 200, cysteine 203, and cysteine 206 together coordinate Zn(2+).

This sequence belongs to the QueC family. In terms of assembly, homodimer. Zn(2+) serves as cofactor.

The catalysed reaction is 7-carboxy-7-deazaguanine + NH4(+) + ATP = 7-cyano-7-deazaguanine + ADP + phosphate + H2O + H(+). The protein operates within purine metabolism; 7-cyano-7-deazaguanine biosynthesis. In terms of biological role, catalyzes the ATP-dependent conversion of 7-carboxy-7-deazaguanine (CDG) to 7-cyano-7-deazaguanine (preQ(0)). This Desulforamulus reducens (strain ATCC BAA-1160 / DSM 100696 / MI-1) (Desulfotomaculum reducens) protein is 7-cyano-7-deazaguanine synthase.